The sequence spans 340 residues: Putative inactive cytochrome P450 family member 4Z2 (340 aa).

Residues 1–9 are Cytoplasmic-facing; it reads MEPSWLQEL. The helical; Signal-anchor for type II membrane protein transmembrane segment at 10-30 threads the bilayer; the sequence is MAHPFLLLILLCMSLLLFQVI. Topologically, residues 31-340 are lumenal; it reads RLYQRRRWTI…AKYPEHQQRC (310 aa).

The protein belongs to the cytochrome P450 family. Heme serves as cofactor. Detected at low levels in mammary gland and mammary carcinoma.

Its subcellular location is the membrane. This is Putative inactive cytochrome P450 family member 4Z2 (CYP4Z2P) from Homo sapiens (Human).